The chain runs to 121 residues: Cell division protein FtsB (121 aa).

Residues 1–6 (MRNWRW) are Cytoplasmic-facing. Residues 7–24 (LLLVLAVLLAWLQYRFWF) form a helical membrane-spanning segment. Over 25–121 (GPGNSGEVMM…PASTDPVDHP (97 aa)) the chain is Periplasmic. Residues 31 to 66 (EVMMLEAQVAHQTQDNEGLRQRNQALAAEVKDLKDG) adopt a coiled-coil conformation. Residues 94–121 (APLPAPASPETAAPAQQAPASTDPVDHP) form a disordered region. The span at 101–121 (SPETAAPAQQAPASTDPVDHP) shows a compositional bias: low complexity.

It belongs to the FtsB family. As to quaternary structure, part of a complex composed of FtsB, FtsL and FtsQ.

The protein resides in the cell inner membrane. Functionally, essential cell division protein. May link together the upstream cell division proteins, which are predominantly cytoplasmic, with the downstream cell division proteins, which are predominantly periplasmic. This Xanthomonas oryzae pv. oryzae (strain MAFF 311018) protein is Cell division protein FtsB.